The primary structure comprises 488 residues: Germacrene A acid 8-beta-hydroxylase (488 aa).

Residues 2–22 (ELFTIFSIVVSSLILFTFWSL) traverse the membrane as a helical; Signal-anchor for type II membrane protein segment. The N-linked (GlcNAc...) asparagine glycan is linked to Asn-407. Heme is bound at residue Cys-429.

The protein belongs to the cytochrome P450 family. Requires heme as cofactor. As to expression, expressed in leaf primordia.

It localises to the membrane. The catalysed reaction is germacra-1(10),4,11(13)-trien-12-oate + reduced [NADPH--hemoprotein reductase] + O2 = 8beta-hydroxygermacra-1(10),4,11(13)-trien-12-oate + oxidized [NADPH--hemoprotein reductase] + H2O + H(+). The protein operates within secondary metabolite biosynthesis; terpenoid biosynthesis. Its function is as follows. Involved in the biosynthesis of germacrene-derived sesquiterpene lactones. Hydroxylates germacrene A acid to 8-beta-hydroxy-germacrene A acid. Unlike 6-alpha-hydroxy-germacrene A acid, this compound cannot undergo spontaneous lactonization. The sequence is that of Germacrene A acid 8-beta-hydroxylase from Helianthus annuus (Common sunflower).